The sequence spans 425 residues: Serine--tRNA ligase (425 aa).

235–237 (TAE) provides a ligand contact to L-serine. 266-268 (RSE) lines the ATP pocket. L-serine is bound at residue Glu-289. 353–356 (EISS) contacts ATP. Position 389 (Ser-389) interacts with L-serine.

Belongs to the class-II aminoacyl-tRNA synthetase family. Type-1 seryl-tRNA synthetase subfamily. Homodimer. The tRNA molecule binds across the dimer.

The protein resides in the cytoplasm. It catalyses the reaction tRNA(Ser) + L-serine + ATP = L-seryl-tRNA(Ser) + AMP + diphosphate + H(+). The catalysed reaction is tRNA(Sec) + L-serine + ATP = L-seryl-tRNA(Sec) + AMP + diphosphate + H(+). Its pathway is aminoacyl-tRNA biosynthesis; selenocysteinyl-tRNA(Sec) biosynthesis; L-seryl-tRNA(Sec) from L-serine and tRNA(Sec): step 1/1. In terms of biological role, catalyzes the attachment of serine to tRNA(Ser). Is also able to aminoacylate tRNA(Sec) with serine, to form the misacylated tRNA L-seryl-tRNA(Sec), which will be further converted into selenocysteinyl-tRNA(Sec). The chain is Serine--tRNA ligase from Desulfotalea psychrophila (strain LSv54 / DSM 12343).